The chain runs to 192 residues: Fe/S biogenesis protein NfuA (192 aa).

The [4Fe-4S] cluster site is built by C149 and C152.

The protein belongs to the NfuA family. As to quaternary structure, homodimer. Requires [4Fe-4S] cluster as cofactor.

Functionally, involved in iron-sulfur cluster biogenesis. Binds a 4Fe-4S cluster, can transfer this cluster to apoproteins, and thereby intervenes in the maturation of Fe/S proteins. Could also act as a scaffold/chaperone for damaged Fe/S proteins. The polypeptide is Fe/S biogenesis protein NfuA (Shewanella baltica (strain OS223)).